The chain runs to 552 residues: Acyl-CoA-dependent acyltransferase MAC1 (552 aa).

It belongs to the trichothecene O-acetyltransferase family.

It participates in secondary metabolite biosynthesis. Functionally, acyl-CoA-dependent acyltransferase; part of the gene cluster that mediates the biosynthesis of mannosylerythritol lipids (MELs), surface-active substances that enhance the availability of water-insoluble substrates. Depending on the number of acetyl groups, mannosylerythritol lipids can be differentiated into MEL A (fully acetylated), MEL B and MEL C (monoacetylated at R-6 and R-4, respectively), and the fully deacetylated MEL D. The first step in the pathway is the generation of mannosylerythritol by the glycosyltransferase EMT1 which catalyzes the transfer of GDP-mannose to the C-4 atom of meso-erythritol. This reaction has to be stereospecific, since only mannosyl-D-erythritol is generated. The produced disaccharide is subsequently acylated with fatty acids of various lengths by the acyltransferases MAC1 and MAC2 at positions C-2 and C-3, repectively. The existence of MEL derivatives which carry an acetyl group at C-2 implies that at least MAC1 also accepts acetyl-CoA as a donor. The final step of MEL biosynthesis is the acetylation of the fully acylated mannosylerythritol lipids catalyzed by the acetyl-CoA-dependent acetyltransferase MAT1. MAT1 displays a relaxed regioselectivity and is able to transfer acetylgroups to both positions C-4 and C-6 of the mannosyl moiety. The polypeptide is Acyl-CoA-dependent acyltransferase MAC1 (Pseudozyma antarctica (strain T-34) (Yeast)).